The chain runs to 334 residues: Anthranilate phosphoribosyltransferase (334 aa).

5-phospho-alpha-D-ribose 1-diphosphate contacts are provided by residues Gly79, 82–83, Ser87, 89–92, 107–115, and Ser119; these read GD, NIST, and KHGNRSISS. Gly79 contacts anthranilate. Residue Ser91 coordinates Mg(2+). An anthranilate-binding site is contributed by Asn110. Arg165 contacts anthranilate. 2 residues coordinate Mg(2+): Asp224 and Glu225.

It belongs to the anthranilate phosphoribosyltransferase family. As to quaternary structure, homodimer. It depends on Mg(2+) as a cofactor.

The enzyme catalyses N-(5-phospho-beta-D-ribosyl)anthranilate + diphosphate = 5-phospho-alpha-D-ribose 1-diphosphate + anthranilate. The protein operates within amino-acid biosynthesis; L-tryptophan biosynthesis; L-tryptophan from chorismate: step 2/5. In terms of biological role, catalyzes the transfer of the phosphoribosyl group of 5-phosphorylribose-1-pyrophosphate (PRPP) to anthranilate to yield N-(5'-phosphoribosyl)-anthranilate (PRA). This is Anthranilate phosphoribosyltransferase from Streptococcus sanguinis (strain SK36).